The sequence spans 394 residues: Phosphoglycerate kinase (394 aa).

Substrate-binding positions include 21 to 23, Arg-36, 59 to 62, Arg-118, and Arg-151; these read DFN and HLGR. Ser-183 carries the phosphoserine modification. Residues Lys-201 and Gly-292 each coordinate ATP. Residue Thr-299 is modified to Phosphothreonine. ATP is bound by residues Glu-323 and 350 to 353; that span reads GGDS.

This sequence belongs to the phosphoglycerate kinase family. Monomer.

The protein resides in the cytoplasm. The enzyme catalyses (2R)-3-phosphoglycerate + ATP = (2R)-3-phospho-glyceroyl phosphate + ADP. It functions in the pathway carbohydrate degradation; glycolysis; pyruvate from D-glyceraldehyde 3-phosphate: step 2/5. This is Phosphoglycerate kinase from Bacillus anthracis (strain A0248).